The chain runs to 53 residues: Light-harvesting protein B-808/866 beta chain (53 aa).

Residue M1 is modified to N-formylmethionine. Over 1–25 (MRDDDDLVPPKWRPLFNNQDWLLHD) the chain is Cytoplasmic. The a bacteriochlorophyll site is built by H24 and H42. Residues 26–48 (IVVKSFYGFGVIAAIAHLLVYLW) traverse the membrane as a helical segment. Topologically, residues 49–53 (KPWLP) are periplasmic.

The protein belongs to the antenna complex beta subunit family. As to quaternary structure, the core complex is formed by different alpha and beta chains, binding bacteriochlorophyll molecules, and arranged most probably in tetrameric structures disposed around the reaction center. The non-pigmented gamma chains may constitute additional components.

It is found in the cell membrane. Antenna complexes are light-harvesting systems, which transfer the excitation energy to the reaction centers. The sequence is that of Light-harvesting protein B-808/866 beta chain (puf2B) from Chloroflexus aurantiacus (strain ATCC 29366 / DSM 635 / J-10-fl).